A 566-amino-acid chain; its full sequence is Transcription factor opdL (566 aa).

Residues 15-45 (CATCARAKCRCVPRNGGRGRCERCHHLNKEC) constitute a DNA-binding region (zn(2)-C6 fungal-type).

The protein resides in the nucleus. In terms of biological role, transcription factor; part of the gene cluster that mediates the biosynthesis of oxopyrrolidines, polyketide-amino acid hybrid compounds with feature structures of tetramic acid. This is Transcription factor opdL from Penicillium oxalicum (strain 114-2 / CGMCC 5302) (Penicillium decumbens).